Reading from the N-terminus, the 177-residue chain is Retrograde regulation protein 1 (177 aa).

Residues 1 to 24 (MSSIPAGTDPGSCGANFKNDRKRR) form a disordered region. The bHLH domain maps to 11-96 (GSCGANFKND…TQAVEYISHL (86 aa)). A phosphoserine mark is found at Ser-50 and Ser-52. Disordered regions lie at residues 52–82 (SNDT…KPNK) and 147–177 (LAAT…GNGS). Phosphothreonine is present on Thr-60. Residues 168–177 (GGYGEYGNGS) are compositionally biased toward gly residues.

In terms of assembly, binds DNA as a heterodimer with RTG3.

The protein localises to the nucleus. Its function is as follows. Required for a novel path of interorganelle communication between mitochondria, peroxisomes and the nucleus, thereby maintaining a functional metabolic interaction between the tricarboxylic acid and glyoxylate cycles. Transcription factor that regulates CIT2 gene expression. Binds to two identical sites oriented as inverted repeats 28 bp apart in a regulatory upstream activation sequence element (UASR) in the CIT2 promoter. The core binding site is 5'-GGTCAC-3'. The sequence is that of Retrograde regulation protein 1 (RTG1) from Saccharomyces cerevisiae (strain ATCC 204508 / S288c) (Baker's yeast).